The sequence spans 292 residues: Ephrin type-A receptor 4a (292 aa).

ATP is bound by residues Ile1–Val9 and Lys27. Residues Ile1–Ile265 form the Protein kinase domain. The active-site Proton acceptor is Asp120. Tyr153 carries the phosphotyrosine; by autocatalysis modification.

The protein belongs to the protein kinase superfamily. Tyr protein kinase family. Ephrin receptor subfamily. As to expression, widely expressed in the developing nervous system.

It is found in the cell membrane. The protein localises to the early endosome. It catalyses the reaction L-tyrosyl-[protein] + ATP = O-phospho-L-tyrosyl-[protein] + ADP + H(+). Its function is as follows. Receptor tyrosine kinase which binds membrane-bound ephrin family ligands residing on adjacent cells, leading to contact-dependent bidirectional signaling into neighboring cells. The signaling pathway downstream of the receptor is referred to as forward signaling while the signaling pathway downstream of the ephrin ligand is referred to as reverse signaling. Highly promiscuous, it has the unique property among Eph receptors to bind and to be physiologically activated by both GPI-anchored ephrin-A and transmembrane ephrin-B ligands including efna1 and efnb3. Upon activation by ephrin ligands, modulates cell morphology and integrin-dependent cell adhesion through regulation of the Rac, Rap and Rho GTPases activity. Plays an important role in the development of the nervous system controlling different steps of axonal guidance including the establishment of the corticospinal projections. The sequence is that of Ephrin type-A receptor 4a (epha4a) from Danio rerio (Zebrafish).